The following is a 716-amino-acid chain: DNA ligase (716 aa).

Residues 42–46 (DAEYD), 91–92 (SL), and E125 each bind NAD(+). K127 serves as the catalytic N6-AMP-lysine intermediate. NAD(+)-binding residues include R148, E184, K300, and K324. Residues C429, C432, C447, and C453 each coordinate Zn(2+). The region spanning 638–716 (TASSPIAGKI…EEAWLQLIEG (79 aa)) is the BRCT domain.

This sequence belongs to the NAD-dependent DNA ligase family. LigA subfamily. Requires Mg(2+) as cofactor. The cofactor is Mn(2+).

It catalyses the reaction NAD(+) + (deoxyribonucleotide)n-3'-hydroxyl + 5'-phospho-(deoxyribonucleotide)m = (deoxyribonucleotide)n+m + AMP + beta-nicotinamide D-nucleotide.. Its function is as follows. DNA ligase that catalyzes the formation of phosphodiester linkages between 5'-phosphoryl and 3'-hydroxyl groups in double-stranded DNA using NAD as a coenzyme and as the energy source for the reaction. It is essential for DNA replication and repair of damaged DNA. The sequence is that of DNA ligase from Bartonella henselae (strain ATCC 49882 / DSM 28221 / CCUG 30454 / Houston 1) (Rochalimaea henselae).